The primary structure comprises 215 residues: Glutathione S-transferase D4 (215 aa).

The 80-residue stretch at 1 to 80 (MDFYYSPRSS…YLVEKYGKDD (80 aa)) folds into the GST N-terminal domain. Residues Ser-9, 50–52 (HTI), and 64–66 (ESR) each bind glutathione. Residues 86–207 (DPQKRALINQ…KGLLQMKTMY (122 aa)) form the GST C-terminal domain.

It belongs to the GST superfamily. Delta family. In terms of assembly, homodimer.

It carries out the reaction RX + glutathione = an S-substituted glutathione + a halide anion + H(+). Conjugation of reduced glutathione to a wide number of exogenous and endogenous hydrophobic electrophiles. May be involved in detoxification. The protein is Glutathione S-transferase D4 of Drosophila melanogaster (Fruit fly).